The sequence spans 376 residues: MSLINEPSYSAYSWGGQGGYGNQTVVDKVLPEMLHLIDPHWYQFPPMNPLWHGLLGFVIGCLGFVSVVGNGMVIYIFSTTKGLRTPSNLLVVNLAFSDFLMMLSMSPPMVINCYYETWVLGPFMCELYALLGSLFGCGSIWTMVMIALDRYNVIVKGLAAKPMTNKTAMLRILGIWAMSIAWTVFPLFGWNRYVPEGNMTACGTDYLNKEWVSRSYILVYSVFVYFLPLATIIYSYWFIVQAVSAHEKQMREQAKKMNVASLRSAENANTSAECKLAKVALMTISLWFFAWTPYLVTDFSGIFEWGKISPLATIWCSLFAKANAVYNPIVYGISHPKYRAALNKKFPSLACASEPDDTASQASGATTVSDEKSASA.

The Extracellular portion of the chain corresponds to 1–51 (MSLINEPSYSAYSWGGQGGYGNQTVVDKVLPEMLHLIDPHWYQFPPMNPLW). Asparagine 22 carries N-linked (GlcNAc...) asparagine glycosylation. A helical membrane pass occupies residues 52–76 (HGLLGFVIGCLGFVSVVGNGMVIYI). Topologically, residues 77–88 (FSTTKGLRTPSN) are cytoplasmic. A helical transmembrane segment spans residues 89 to 113 (LLVVNLAFSDFLMMLSMSPPMVINC). Over 114 to 128 (YYETWVLGPFMCELY) the chain is Extracellular. Residues cysteine 125 and cysteine 202 are joined by a disulfide bond. Residues 129 to 148 (ALLGSLFGCGSIWTMVMIAL) traverse the membrane as a helical segment. Residues 149 to 167 (DRYNVIVKGLAAKPMTNKT) are Cytoplasmic-facing. The chain crosses the membrane as a helical span at residues 168–191 (AMLRILGIWAMSIAWTVFPLFGWN). The Extracellular segment spans residues 192 to 215 (RYVPEGNMTACGTDYLNKEWVSRS). An N-linked (GlcNAc...) asparagine glycan is attached at asparagine 198. The helical transmembrane segment at 216–243 (YILVYSVFVYFLPLATIIYSYWFIVQAV) threads the bilayer. Residues 244 to 278 (SAHEKQMREQAKKMNVASLRSAENANTSAECKLAK) are Cytoplasmic-facing. The chain crosses the membrane as a helical span at residues 279–302 (VALMTISLWFFAWTPYLVTDFSGI). Topologically, residues 303–309 (FEWGKIS) are extracellular. Residues 310–334 (PLATIWCSLFAKANAVYNPIVYGIS) form a helical membrane-spanning segment. Position 321 is an N6-(retinylidene)lysine (lysine 321). The Cytoplasmic portion of the chain corresponds to 335–376 (HPKYRAALNKKFPSLACASEPDDTASQASGATTVSDEKSASA). The disordered stretch occupies residues 353-376 (SEPDDTASQASGATTVSDEKSASA). The span at 358–368 (TASQASGATTV) shows a compositional bias: polar residues.

The protein belongs to the G-protein coupled receptor 1 family. Opsin subfamily. Phosphorylated on some or all of the serine and threonine residues present in the C-terminal region.

The protein localises to the membrane. Its function is as follows. Visual pigments are the light-absorbing molecules that mediate vision. They consist of an apoprotein, opsin, covalently linked to cis-retinal. The protein is Rhodopsin of Sphodromantis sp. (Mantis).